We begin with the raw amino-acid sequence, 215 residues long: Pyridoxine/pyridoxamine 5'-phosphate oxidase (215 aa).

Substrate is bound by residues 9–12 and K69; that span reads RRDY. FMN contacts are provided by residues 64–69, 79–80, K86, and Q108; these read RVLLLK and FT. Substrate contacts are provided by Y126, R130, and S134. FMN-binding positions include 143-144 and W188; that span reads QS. 194–196 is a substrate binding site; it reads RLH. R198 contacts FMN.

This sequence belongs to the pyridoxamine 5'-phosphate oxidase family. As to quaternary structure, homodimer. It depends on FMN as a cofactor.

The catalysed reaction is pyridoxamine 5'-phosphate + O2 + H2O = pyridoxal 5'-phosphate + H2O2 + NH4(+). The enzyme catalyses pyridoxine 5'-phosphate + O2 = pyridoxal 5'-phosphate + H2O2. It participates in cofactor metabolism; pyridoxal 5'-phosphate salvage; pyridoxal 5'-phosphate from pyridoxamine 5'-phosphate: step 1/1. Its pathway is cofactor metabolism; pyridoxal 5'-phosphate salvage; pyridoxal 5'-phosphate from pyridoxine 5'-phosphate: step 1/1. In terms of biological role, catalyzes the oxidation of either pyridoxine 5'-phosphate (PNP) or pyridoxamine 5'-phosphate (PMP) into pyridoxal 5'-phosphate (PLP). This is Pyridoxine/pyridoxamine 5'-phosphate oxidase from Pseudomonas syringae pv. tomato (strain ATCC BAA-871 / DC3000).